The sequence spans 223 residues: Small ribosomal subunit protein uS3 (223 aa).

Residues 39–115 (IRKYIEKNLA…RVFINIVEIK (77 aa)) enclose the KH type-2 domain.

It belongs to the universal ribosomal protein uS3 family. Part of the 30S ribosomal subunit. Forms a tight complex with proteins S10 and S14.

Binds the lower part of the 30S subunit head. Binds mRNA in the 70S ribosome, positioning it for translation. The protein is Small ribosomal subunit protein uS3 of Leuconostoc mesenteroides subsp. mesenteroides (strain ATCC 8293 / DSM 20343 / BCRC 11652 / CCM 1803 / JCM 6124 / NCDO 523 / NBRC 100496 / NCIMB 8023 / NCTC 12954 / NRRL B-1118 / 37Y).